The sequence spans 183 residues: Ribosome maturation factor RimM (183 aa).

In terms of domain architecture, PRC barrel spans 95–171 (DPDEFYDHEL…VVVIDPPEGL (77 aa)).

Belongs to the RimM family. In terms of assembly, binds ribosomal protein uS19.

The protein resides in the cytoplasm. In terms of biological role, an accessory protein needed during the final step in the assembly of 30S ribosomal subunit, possibly for assembly of the head region. Essential for efficient processing of 16S rRNA. May be needed both before and after RbfA during the maturation of 16S rRNA. It has affinity for free ribosomal 30S subunits but not for 70S ribosomes. This Rhodococcus opacus (strain B4) protein is Ribosome maturation factor RimM.